Consider the following 215-residue polypeptide: Sodium channel regulatory subunit beta-3 (215 aa).

The N-terminal stretch at 1–24 (MPAFNRLLPLASLVLIYWVRVCFP) is a signal peptide. Positions 25–138 (VCVEVPSETE…EAHRPFVKTT (114 aa)) constitute an Ig-like C2-type domain. At 25–156 (VCVEVPSETE…EEAGEDFTSV (132 aa)) the chain is on the extracellular side. 2 disulfides stabilise this stretch: C26/C48 and C45/C120. N95, N109, N113, and N121 each carry an N-linked (GlcNAc...) asparagine glycan. The helical transmembrane segment at 157-178 (VSEIMMYILLVFLTLWLFIEMI) threads the bilayer. The Cytoplasmic segment spans residues 179 to 215 (YCYRKVSKAEEAAQENASDYLAIPSENKENSVVPVEE).

This sequence belongs to the sodium channel auxiliary subunit SCN3B (TC 8.A.17) family. A voltage-gated sodium (Nav) channel consists of an ion-conducting pore-forming alpha subunit functional on its own that is regulated by one or more beta subunits. Forms homodimers and homotrimers. SCN3B is non-covalently associated with alpha subunits and induces the formation of alpha subunit oligomers, including trimers. Interacts with SCN5A/Nav1.5; regulatory subunit of SCN5A/Nav1.5. Interacts with SCN7A/Nav2.1; probable regulatory subunit of SCN7A/Nav2.1. Interacts with SCN10A; regulatory subunit of SCN10A/Nav1.8. Interacts with NFASC; probably involved in targeting the sodium channels to the nodes of Ranvier. Post-translationally, intramolecular disulfide bonds favor the voltage-gated sodium channel oligomeric complex assembly. N-glycosylated. As to expression, expressed broadly in neurons in the central and peripheral nervous systems, but not in glia and most non-neuronal cells. Weak detection in lung and adrenal gland.

It localises to the cell membrane. Regulatory subunit of multiple voltage-gated sodium (Nav) channels directly mediating the depolarization of excitable membranes. Navs, also called VGSCs (voltage-gated sodium channels) or VDSCs (voltage-dependent sodium channels), operate by switching between closed and open conformations depending on the voltage difference across the membrane. In the open conformation they allow Na(+) ions to selectively pass through the pore, along their electrochemical gradient. The influx of Na+ ions provokes membrane depolarization, initiating the propagation of electrical signals throughout cells and tissues. The accessory beta subunits participate in localization and functional modulation of the Nav channels. Voltage-gated sodium channels regulatory subunit that modulates channel gating kinetics. Modulates the activity of SCN2A/Nav1.2, causing a hyperpolarizing shift in the voltage-dependence of inactivation and increasing the fraction of channels operating in the fast gating mode. Also able to induce unique persistent SCN2A/Nav1.2-mediated sodium currents. Could modulate the activity of SCN10A/Nav1.8. This Rattus norvegicus (Rat) protein is Sodium channel regulatory subunit beta-3.